The primary structure comprises 403 residues: Inhibitor of growth protein 3 (403 aa).

Residues 112–149 form a disordered region; it reads DTPSQPVNNHHAHSHTPVEKRKYNPTSHHTTTDHIPEK. Residues Lys-133, Lys-150, and Lys-152 each participate in a glycyl lysine isopeptide (Lys-Gly) (interchain with G-Cter in SUMO2) cross-link. Lys-166 is modified (N6-acetyllysine). A Glycyl lysine isopeptide (Lys-Gly) (interchain with G-Cter in SUMO2) cross-link involves residue Lys-241. Lys-249 carries the N6-acetyllysine modification. The segment at 271–310 is disordered; sequence TQNASSSAADSRSGRKSKNNNKSSSQQSSSSSSSSSLSSC. The span at 290–310 shows a compositional bias: low complexity; the sequence is NNKSSSQQSSSSSSSSSLSSC. Residues 345–394 form a PHD-type zinc finger; sequence PRYCICNQVSYGEMVGCDNQDCPIEWFHYGCVGLTEAPKGKWYCPQCTAA. Cys-348, Cys-350, Cys-361, Cys-366, His-372, Cys-375, Cys-388, and Cys-391 together coordinate Zn(2+).

Belongs to the ING family. As to quaternary structure, interacts with H3K4me3 and to a lesser extent with H3K4me2. Component of the NuA4 histone acetyltransferase complex which contains the catalytic subunit KAT5/TIP60 and the subunits EP400, TRRAP/PAF400, BRD8/SMAP, EPC1, DMAP1/DNMAP1, RUVBL1/TIP49, RUVBL2, ING3, actin, ACTL6A/BAF53A, MORF4L1/MRG15, MORF4L2/MRGX, MRGBP, YEATS4/GAS41, VPS72/YL1 and MEAF6. The NuA4 complex interacts with MYC. HTATTIP/TIP60, EPC1, and ING3 together constitute a minimal HAT complex termed Piccolo NuA4. Component of a SWR1-like complex.

It localises to the nucleus. Functionally, component of the NuA4 histone acetyltransferase (HAT) complex which is involved in transcriptional activation of select genes principally by acetylation of nucleosomal histones H4 and H2A. This modification may both alter nucleosome - DNA interactions and promote interaction of the modified histones with other proteins which positively regulate transcription. This complex may be required for the activation of transcriptional programs associated with oncogene and proto-oncogene mediated growth induction, tumor suppressor mediated growth arrest and replicative senescence, apoptosis, and DNA repair. NuA4 may also play a direct role in DNA repair when directly recruited to sites of DNA damage. Component of a SWR1-like complex that specifically mediates the removal of histone H2A.Z/H2AZ1 from the nucleosome. In Pongo abelii (Sumatran orangutan), this protein is Inhibitor of growth protein 3 (ING3).